A 671-amino-acid chain; its full sequence is DNA ligase (671 aa).

NAD(+)-binding positions include 31 to 35 (DAEYD), 80 to 81 (SL), and E110. The active-site N6-AMP-lysine intermediate is K112. NAD(+) is bound by residues R133, E167, K283, and K307. Residues C401, C404, C419, and C424 each coordinate Zn(2+). One can recognise a BRCT domain in the interval 587–671 (EEELVFAGKT…YLPDEGGLNE (85 aa)).

Belongs to the NAD-dependent DNA ligase family. LigA subfamily. The cofactor is Mg(2+). Mn(2+) serves as cofactor.

It catalyses the reaction NAD(+) + (deoxyribonucleotide)n-3'-hydroxyl + 5'-phospho-(deoxyribonucleotide)m = (deoxyribonucleotide)n+m + AMP + beta-nicotinamide D-nucleotide.. In terms of biological role, DNA ligase that catalyzes the formation of phosphodiester linkages between 5'-phosphoryl and 3'-hydroxyl groups in double-stranded DNA using NAD as a coenzyme and as the energy source for the reaction. It is essential for DNA replication and repair of damaged DNA. This chain is DNA ligase, found in Listeria monocytogenes serotype 4b (strain CLIP80459).